The following is a 28-amino-acid chain: Humanin-like 2 (28 aa).

This sequence belongs to the humanin family. In terms of tissue distribution, highly expressed in testis. Also expressed in kidney, heart, skeletal muscles and brain.

It is found in the secreted. Its subcellular location is the cytoplasm. In terms of biological role, plays a role as a neuroprotective and antiapoptotic factor. The protein is Humanin-like 2 of Homo sapiens (Human).